Here is a 124-residue protein sequence, read N- to C-terminus: MTYLLVFLGGGLGAMFRHFINTVSGRMLGTAFPYHTFFINVSGSLVMGLIAGYFAFKGGSSQHVRLFLMTGILGGYTTFSAFSLDAALLYERGAVGLAALYVLGSVALAIAGLFAGLALIRAIT.

The next 4 helical transmembrane spans lie at 3–23 (YLLVFLGGGLGAMFRHFINTV), 36–56 (TFFINVSGSLVMGLIAGYFAF), 66–86 (LFLMTGILGGYTTFSAFSLDA), and 100–120 (LYVLGSVALAIAGLFAGLALI). Gly-74 and Thr-77 together coordinate Na(+).

The protein belongs to the fluoride channel Fluc/FEX (TC 1.A.43) family.

The protein resides in the cell inner membrane. The enzyme catalyses fluoride(in) = fluoride(out). Na(+) is not transported, but it plays an essential structural role and its presence is essential for fluoride channel function. In terms of biological role, fluoride-specific ion channel. Important for reducing fluoride concentration in the cell, thus reducing its toxicity. This Rhodopseudomonas palustris (strain BisB5) protein is Fluoride-specific ion channel FluC.